Here is a 78-residue protein sequence, read N- to C-terminus: Small ribosomal subunit protein bS18 (78 aa).

Belongs to the bacterial ribosomal protein bS18 family. As to quaternary structure, part of the 30S ribosomal subunit. Forms a tight heterodimer with protein bS6.

Functionally, binds as a heterodimer with protein bS6 to the central domain of the 16S rRNA, where it helps stabilize the platform of the 30S subunit. The polypeptide is Small ribosomal subunit protein bS18 (Kineococcus radiotolerans (strain ATCC BAA-149 / DSM 14245 / SRS30216)).